The primary structure comprises 292 residues: Ribosomal RNA small subunit methyltransferase A (292 aa).

Residues Asn-46, Leu-48, Gly-73, Glu-94, Asp-118, and Asn-136 each coordinate S-adenosyl-L-methionine.

The protein belongs to the class I-like SAM-binding methyltransferase superfamily. rRNA adenine N(6)-methyltransferase family. RsmA subfamily.

It is found in the cytoplasm. The catalysed reaction is adenosine(1518)/adenosine(1519) in 16S rRNA + 4 S-adenosyl-L-methionine = N(6)-dimethyladenosine(1518)/N(6)-dimethyladenosine(1519) in 16S rRNA + 4 S-adenosyl-L-homocysteine + 4 H(+). Functionally, specifically dimethylates two adjacent adenosines (A1518 and A1519) in the loop of a conserved hairpin near the 3'-end of 16S rRNA in the 30S particle. May play a critical role in biogenesis of 30S subunits. This chain is Ribosomal RNA small subunit methyltransferase A, found in Deinococcus radiodurans (strain ATCC 13939 / DSM 20539 / JCM 16871 / CCUG 27074 / LMG 4051 / NBRC 15346 / NCIMB 9279 / VKM B-1422 / R1).